The primary structure comprises 367 residues: UDP-N-acetylglucosamine--N-acetylmuramyl-(pentapeptide) pyrophosphoryl-undecaprenol N-acetylglucosamine transferase (367 aa).

UDP-N-acetyl-alpha-D-glucosamine contacts are provided by residues 13-15 (TGG), Arg-168, Ser-196, Ile-252, and Gln-297.

This sequence belongs to the glycosyltransferase 28 family. MurG subfamily.

The protein localises to the cell inner membrane. It carries out the reaction di-trans,octa-cis-undecaprenyl diphospho-N-acetyl-alpha-D-muramoyl-L-alanyl-D-glutamyl-meso-2,6-diaminopimeloyl-D-alanyl-D-alanine + UDP-N-acetyl-alpha-D-glucosamine = di-trans,octa-cis-undecaprenyl diphospho-[N-acetyl-alpha-D-glucosaminyl-(1-&gt;4)]-N-acetyl-alpha-D-muramoyl-L-alanyl-D-glutamyl-meso-2,6-diaminopimeloyl-D-alanyl-D-alanine + UDP + H(+). It participates in cell wall biogenesis; peptidoglycan biosynthesis. Cell wall formation. Catalyzes the transfer of a GlcNAc subunit on undecaprenyl-pyrophosphoryl-MurNAc-pentapeptide (lipid intermediate I) to form undecaprenyl-pyrophosphoryl-MurNAc-(pentapeptide)GlcNAc (lipid intermediate II). The polypeptide is UDP-N-acetylglucosamine--N-acetylmuramyl-(pentapeptide) pyrophosphoryl-undecaprenol N-acetylglucosamine transferase (Methylibium petroleiphilum (strain ATCC BAA-1232 / LMG 22953 / PM1)).